The primary structure comprises 906 residues: Protein translocase subunit SecA (906 aa).

Residues Gln86, 104–108, and Asp511 contribute to the ATP site; that span reads GEGKT. 2 stretches are compositionally biased toward basic and acidic residues: residues 853–865 and 877–888; these read HESVIDNNQRHDE and VRREGPKVKRND. The tract at residues 853-906 is disordered; that stretch reads HESVIDNNQRHDEDEQEEAPKVQQVRREGPKVKRNDPCPCGSGKKYKQCHSKVE. Cys890, Cys892, Cys901, and His902 together coordinate Zn(2+). Residues 896-906 show a composition bias toward basic residues; it reads KKYKQCHSKVE.

This sequence belongs to the SecA family. In terms of assembly, monomer and homodimer. Part of the essential Sec protein translocation apparatus which comprises SecA, SecYEG and auxiliary proteins SecDF-YajC and YidC. Zn(2+) is required as a cofactor.

It is found in the cell inner membrane. The protein resides in the cytoplasm. The catalysed reaction is ATP + H2O + cellular proteinSide 1 = ADP + phosphate + cellular proteinSide 2.. Functionally, part of the Sec protein translocase complex. Interacts with the SecYEG preprotein conducting channel. Has a central role in coupling the hydrolysis of ATP to the transfer of proteins into and across the cell membrane, serving both as a receptor for the preprotein-SecB complex and as an ATP-driven molecular motor driving the stepwise translocation of polypeptide chains across the membrane. The polypeptide is Protein translocase subunit SecA (Francisella tularensis subsp. mediasiatica (strain FSC147)).